The chain runs to 279 residues: Tryptophan 2,3-dioxygenase (279 aa).

Substrate-binding positions include 48–52 (FIVIH), Y110, and R114. H237 is a binding site for heme. Residue T251 coordinates substrate.

Belongs to the tryptophan 2,3-dioxygenase family. As to quaternary structure, homotetramer. Heme serves as cofactor.

It catalyses the reaction L-tryptophan + O2 = N-formyl-L-kynurenine. The protein operates within amino-acid degradation; L-tryptophan degradation via kynurenine pathway; L-kynurenine from L-tryptophan: step 1/2. Functionally, heme-dependent dioxygenase that catalyzes the oxidative cleavage of the L-tryptophan (L-Trp) pyrrole ring and converts L-tryptophan to N-formyl-L-kynurenine. Catalyzes the oxidative cleavage of the indole moiety. In Bacillus anthracis, this protein is Tryptophan 2,3-dioxygenase.